The chain runs to 198 residues: Ribonuclease HII (198 aa).

The RNase H type-2 domain occupies 10–198; it reads HLVAGVDEVG…PVKRALGLVC (189 aa). Positions 16, 17, and 108 each coordinate a divalent metal cation.

The protein belongs to the RNase HII family. It depends on Mn(2+) as a cofactor. The cofactor is Mg(2+).

Its subcellular location is the cytoplasm. The catalysed reaction is Endonucleolytic cleavage to 5'-phosphomonoester.. Functionally, endonuclease that specifically degrades the RNA of RNA-DNA hybrids. This chain is Ribonuclease HII, found in Enterobacter sp. (strain 638).